Here is a 234-residue protein sequence, read N- to C-terminus: Phosphoribosylaminoimidazole-succinocarboxamide synthase (234 aa).

The protein belongs to the SAICAR synthetase family.

The enzyme catalyses 5-amino-1-(5-phospho-D-ribosyl)imidazole-4-carboxylate + L-aspartate + ATP = (2S)-2-[5-amino-1-(5-phospho-beta-D-ribosyl)imidazole-4-carboxamido]succinate + ADP + phosphate + 2 H(+). It functions in the pathway purine metabolism; IMP biosynthesis via de novo pathway; 5-amino-1-(5-phospho-D-ribosyl)imidazole-4-carboxamide from 5-amino-1-(5-phospho-D-ribosyl)imidazole-4-carboxylate: step 1/2. The sequence is that of Phosphoribosylaminoimidazole-succinocarboxamide synthase from Streptococcus pyogenes serotype M18 (strain MGAS8232).